We begin with the raw amino-acid sequence, 344 residues long: F17a-G fimbrial adhesin (344 aa).

An N-terminal signal peptide occupies residues 1–22 (MTNFYKVFLAVFILVCCNISQA). A receptor-binding lectin domain region spans residues 23-199 (AVSFIGSTEN…SLNPFTLNDT (177 aa)). Residues 65 to 66 (AN), 110 to 111 (DT), and 139 to 142 (STQG) contribute to the a carbohydrate site. Cysteine 75 and cysteine 132 are disulfide-bonded. Residues 200 to 344 (VTSCRLLTPS…GISTFTFSYQ (145 aa)) are fimbrillin-binding domain. Residues 288–308 (LKFGPDSPVKGNENQWQLSTG) form a disordered region. Positions 299–308 (NENQWQLSTG) are enriched in polar residues.

This sequence belongs to the fimbrial protein family.

The protein localises to the fimbrium. Its function is as follows. Essential fimbrial adhesion factor that mediates binding to N-acetylglucosamine-containing receptors in the host intestinal microvilli, leading to colonization of the intestinal tissue, and diarrhea or septicemia. Also confers adhesiveness to laminin and basement membranes. The polypeptide is F17a-G fimbrial adhesin (f17aG) (Escherichia coli).